The primary structure comprises 100 residues: Urease subunit gamma (100 aa).

The protein belongs to the urease gamma subunit family. As to quaternary structure, heterotrimer of UreA (gamma), UreB (beta) and UreC (alpha) subunits. Three heterotrimers associate to form the active enzyme.

The protein localises to the cytoplasm. It catalyses the reaction urea + 2 H2O + H(+) = hydrogencarbonate + 2 NH4(+). The protein operates within nitrogen metabolism; urea degradation; CO(2) and NH(3) from urea (urease route): step 1/1. In Dinoroseobacter shibae (strain DSM 16493 / NCIMB 14021 / DFL 12), this protein is Urease subunit gamma.